The chain runs to 208 residues: Imidazole glycerol phosphate synthase subunit HisH (208 aa).

A Glutamine amidotransferase type-1 domain is found at 1–206; the sequence is MIVIIDYDTG…KEVIRSCKSS (206 aa). The Nucleophile role is filled by cysteine 79. Residues histidine 181 and glutamate 183 contribute to the active site.

As to quaternary structure, heterodimer of HisH and HisF.

The protein localises to the cytoplasm. The catalysed reaction is 5-[(5-phospho-1-deoxy-D-ribulos-1-ylimino)methylamino]-1-(5-phospho-beta-D-ribosyl)imidazole-4-carboxamide + L-glutamine = D-erythro-1-(imidazol-4-yl)glycerol 3-phosphate + 5-amino-1-(5-phospho-beta-D-ribosyl)imidazole-4-carboxamide + L-glutamate + H(+). It catalyses the reaction L-glutamine + H2O = L-glutamate + NH4(+). The protein operates within amino-acid biosynthesis; L-histidine biosynthesis; L-histidine from 5-phospho-alpha-D-ribose 1-diphosphate: step 5/9. IGPS catalyzes the conversion of PRFAR and glutamine to IGP, AICAR and glutamate. The HisH subunit catalyzes the hydrolysis of glutamine to glutamate and ammonia as part of the synthesis of IGP and AICAR. The resulting ammonia molecule is channeled to the active site of HisF. This is Imidazole glycerol phosphate synthase subunit HisH from Listeria welshimeri serovar 6b (strain ATCC 35897 / DSM 20650 / CCUG 15529 / CIP 8149 / NCTC 11857 / SLCC 5334 / V8).